Consider the following 292-residue polypeptide: RWD domain-containing protein 2A (292 aa).

One can recognise an RWD domain in the interval 14 to 134; that stretch reads LEMEMLFSMF…QWLQDNSASY (121 aa).

The polypeptide is RWD domain-containing protein 2A (RWDD2A) (Macaca fascicularis (Crab-eating macaque)).